We begin with the raw amino-acid sequence, 779 residues long: Acyl-CoA dehydrogenase family member 11 (779 aa).

Lysine 175 is modified (N6-acetyllysine). Serine 210 carries the post-translational modification Phosphoserine. The residue at position 323 (tyrosine 323) is a Phosphotyrosine. Lysine 368 and lysine 390 each carry N6-succinyllysine. Residues 503-513 (FCMTEPNVSSS), 511-513 (SSS), 537-539 (WSS), and serine 539 contribute to the FAD site. Serine 513 is a binding site for substrate. 628–631 (GPGR) serves as a coordination point for substrate. FAD-binding positions include arginine 656, glutamine 726, and 726-730 (QVHGG). Glycine 754 serves as a coordination point for substrate. Residues 755–757 (PDE) and glutamate 757 contribute to the FAD site. Position 765 is an N6-acetyllysine (lysine 765).

The protein belongs to the acyl-CoA dehydrogenase family. In terms of assembly, homodimer. The cofactor is FAD.

It is found in the peroxisome. The protein resides in the mitochondrion membrane. The enzyme catalyses a 2,3-saturated acyl-CoA + oxidized [electron-transfer flavoprotein] + H(+) = a (2E)-enoyl-CoA + reduced [electron-transfer flavoprotein]. It carries out the reaction docosanoyl-CoA + oxidized [electron-transfer flavoprotein] + H(+) = (2E)-docosenoyl-CoA + reduced [electron-transfer flavoprotein]. It catalyses the reaction tetracosanoyl-CoA + oxidized [electron-transfer flavoprotein] + H(+) = (2E)-tetracosenoyl-CoA + reduced [electron-transfer flavoprotein]. The catalysed reaction is eicosanoyl-CoA + oxidized [electron-transfer flavoprotein] + H(+) = (2E)-eicosenoyl-CoA + reduced [electron-transfer flavoprotein]. The enzyme catalyses hexacosanoyl-CoA + oxidized [electron-transfer flavoprotein] + H(+) = (2E)-hexacosenoyl-CoA + reduced [electron-transfer flavoprotein]. It carries out the reaction tricosanoyl-CoA + oxidized [electron-transfer flavoprotein] + H(+) = (2E)-tricosenoyl-CoA + reduced [electron-transfer flavoprotein]. It functions in the pathway lipid metabolism; fatty acid beta-oxidation. Acyl-CoA dehydrogenase, that exhibits maximal activity towards saturated C22-CoA. Probably participates in beta-oxydation and energy production but could also play a role in the metabolism of specific fatty acids to control fatty acids composition of cellular lipids in brain. The polypeptide is Acyl-CoA dehydrogenase family member 11 (Acad11) (Rattus norvegicus (Rat)).